The primary structure comprises 664 residues: Type IV inositol polyphosphate 5-phosphatase 3 (664 aa).

The interval 35-76 (GRDPEYGADTDNESENEDAREDNDDSSSDEEGGSGSRGRESK) is disordered. Acidic residues predominate over residues 40-66 (YGADTDNESENEDAREDNDDSSSDEEG). Catalytic stretches follow at residues 514–529 (ERII…LSSS) and 592–607 (PKRT…SYGK).

It belongs to the inositol polyphosphate 5-phosphatase family.

It catalyses the reaction a 1,2-diacyl-sn-glycero-3-phospho-(1D-myo-inositol-4,5-bisphosphate) + H2O = a 1,2-diacyl-sn-glycero-3-phospho-(1D-myo-inositol 4-phosphate) + phosphate. The enzyme catalyses a 1,2-diacyl-sn-glycero-3-phospho-(1D-myo-inositol-3,4,5-trisphosphate) + H2O = a 1,2-diacyl-sn-glycero-3-phospho-(1D-myo-inositol-3,4-bisphosphate) + phosphate. Has phosphatase activity toward PtdIns(4,5)P2 and PtdIns(3,4,5)P3. The chain is Type IV inositol polyphosphate 5-phosphatase 3 from Arabidopsis thaliana (Mouse-ear cress).